Reading from the N-terminus, the 128-residue chain is Large ribosomal subunit protein mL52 (128 aa).

The transit peptide at 1–28 (MLQIAKLCLATSGRITAQRYVAVTTARA) directs the protein to the mitochondrion.

It belongs to the mitochondrion-specific ribosomal protein mL52 family. In terms of assembly, component of the mitochondrial ribosome large subunit (39S) which comprises a 16S rRNA and about 50 distinct proteins.

It is found in the mitochondrion. The sequence is that of Large ribosomal subunit protein mL52 (mRpL52) from Drosophila pseudoobscura pseudoobscura (Fruit fly).